A 162-amino-acid chain; its full sequence is SsrA-binding protein (162 aa).

The protein belongs to the SmpB family.

It localises to the cytoplasm. In terms of biological role, required for rescue of stalled ribosomes mediated by trans-translation. Binds to transfer-messenger RNA (tmRNA), required for stable association of tmRNA with ribosomes. tmRNA and SmpB together mimic tRNA shape, replacing the anticodon stem-loop with SmpB. tmRNA is encoded by the ssrA gene; the 2 termini fold to resemble tRNA(Ala) and it encodes a 'tag peptide', a short internal open reading frame. During trans-translation Ala-aminoacylated tmRNA acts like a tRNA, entering the A-site of stalled ribosomes, displacing the stalled mRNA. The ribosome then switches to translate the ORF on the tmRNA; the nascent peptide is terminated with the 'tag peptide' encoded by the tmRNA and targeted for degradation. The ribosome is freed to recommence translation, which seems to be the essential function of trans-translation. The protein is SsrA-binding protein of Sorangium cellulosum (strain So ce56) (Polyangium cellulosum (strain So ce56)).